Consider the following 552-residue polypeptide: B-cell linker protein (552 aa).

Residues 50–431 (TGKDTWDRLK…SSISSISSTA (382 aa)) are disordered. Residues 67–76 (PRRDYASEHA) show a composition bias toward basic and acidic residues. Positions 77–93 (DNEEEQWSDDFDSDYEN) are enriched in acidic residues. 6 positions are modified to phosphotyrosine; by SYK: Y91, Y103, Y115, Y194, Y205, and Y249. A compositionally biased stretch (acidic residues) spans 188–205 (SDDEDNYIVPVDNDDDNY). Composition is skewed to basic and acidic residues over residues 277–295 (NAEH…KLDA), 309–322 (PKTD…DENH), and 368–382 (NEDK…RGSS). Residues 442-549 (WYAATCDRKT…KDSTKLKYIV (108 aa)) enclose the SH2 domain.

As to quaternary structure, associates with PLCG1, VAV1 and NCK1 in a B-cell antigen receptor-dependent fashion. Interacts through its SH2 domain with CD79A. Interacts with VAV3, PLCG2 and GRB2. Following BCR activation, phosphorylated on tyrosine residues by SYK and LYN. When phosphorylated, serves as a scaffold to assemble downstream targets of antigen activation, including PLCG1, VAV1, GRB2 and NCK1. Phosphorylation is required for both Ca(2+) and MAPK signaling pathways. Phosphorylation of Tyr-103, Tyr-194 and Tyr-205 facilitates PLCG1 binding. Phosphorylation of Tyr-115 facilitates BTK binding. Phosphorylation of Tyr-91 facilitates VAV1 and NCK1 binding. In terms of tissue distribution, highly expressed in the bursa, very low expression in ovary and spleen. Expression was variable among B-cell lines. Highly expressed in immature B-cell lines such as DT40 and CL18, low expression was seen in relatively mature B-cell lines, such as 293B9 and 249L4. No expression was seen in T-cell lines.

Its subcellular location is the cytoplasm. It is found in the cell membrane. Functionally, functions as a central linker protein, downstream of the B-cell receptor (BCR), bridging the SYK kinase to a multitude of signaling pathways and regulating biological outcomes of B-cell function and development. Plays a role in the activation of ERK/EPHB2, MAP kinase p38 and JNK. Modulates AP1 activation. Important for the activation of NF-kappa-B and NFAT. Plays an important role in BCR-mediated PLCG1 and PLCG2 activation and Ca(2+) mobilization and is required for trafficking of the BCR to late endosomes. However, does not seem to be required for pre-BCR-mediated activation of MAP kinase and phosphatidyl-inositol 3 (PI3) kinase signaling. May be required for the RAC1-JNK pathway. Plays a critical role in orchestrating the pro-B cell to pre-B cell transition. Plays a critical role in B-cell development in the bursa. Plays an important role in BCR-induced apoptosis. The polypeptide is B-cell linker protein (BLNK) (Gallus gallus (Chicken)).